We begin with the raw amino-acid sequence, 308 residues long: SAP30-binding protein (308 aa).

A disordered region spans residues 15–101 (AEYSDPESDG…EAEKRDPQEL (87 aa)). Residues Ser-18, Ser-22, Ser-43, and Ser-52 each carry the phosphoserine modification. A compositionally biased stretch (acidic residues) spans 57–78 (DEDGYEEEEDENSKQSEDDDSE). Over residues 79–99 (TEKPEADDPKDNTEAEKRDPQ) the composition is skewed to basic and acidic residues. Lys-95 is covalently cross-linked (Glycyl lysine isopeptide (Lys-Gly) (interchain with G-Cter in SUMO2)). Position 113 is a phosphoserine (Ser-113). Residues Lys-220, Lys-304, and Lys-305 each participate in a glycyl lysine isopeptide (Lys-Gly) (interchain with G-Cter in SUMO2) cross-link.

The protein belongs to the HCNGP family. In terms of assembly, interacts with histone deacetylase complex subunit SAP30.

It localises to the nucleus. Plays a role in transcriptional repression by promoting histone deacetylase activity, leading to deacetylation of histone H3. May be involved in the regulation of beta-2-microglobulin genes. The polypeptide is SAP30-binding protein (Sap30bp) (Mus musculus (Mouse)).